The primary structure comprises 561 residues: Carboxylesterase 1E (561 aa).

The N-terminal stretch at M1–G18 is a signal peptide. Residues N79 and N107 are each glycosylated (N-linked (GlcNAc...) asparagine). C87 and C116 form a disulfide bridge. S221 serves as the catalytic Acyl-ester intermediate. C273 and C284 are joined by a disulfide. Residues E353 and H466 each act as charge relay system in the active site. N-linked (GlcNAc...) asparagine glycosylation is present at N489. Positions H558–L561 match the Prevents secretion from ER motif.

The protein belongs to the type-B carboxylesterase/lipase family. Expressed in liver.

It localises to the endoplasmic reticulum lumen. It is found in the microsome membrane. It carries out the reaction a carboxylic ester + H2O = an alcohol + a carboxylate + H(+). The catalysed reaction is all-trans-retinyl hexadecanoate + H2O = all-trans-retinol + hexadecanoate + H(+). Its function is as follows. Involved in the detoxification of xenobiotics and in the activation of ester and amide prodrugs. Hydrolyzes retinyl esters. The chain is Carboxylesterase 1E (Ces1e) from Rattus norvegicus (Rat).